The sequence spans 32 residues: Acatoxin 1 (32 aa).

Disulfide bonds link cysteine 1–cysteine 15, cysteine 8–cysteine 20, and cysteine 14–cysteine 26.

It is found in the secreted. Its subcellular location is the nematocyst. In terms of biological role, reversibly inhibits acid-sensing ion channels (ASIC) in rat dorsal root ganglia neurons. Reversibly inhibits voltage-gated potassium channels (Kv) in rat DRG neurons. In Anthopleura cascaia (Sea anemone), this protein is Acatoxin 1.